The primary structure comprises 482 residues: 23S rRNA (uracil(1939)-C(5))-methyltransferase RlmD (482 aa).

The segment at 1–33 (MANLFKQSRAKQKNKTTPSQTQTSTKGSARANA) is disordered. The span at 15-28 (KTTPSQTQTSTKGS) shows a compositional bias: low complexity. Residues 51 to 108 (TAQDANNNAITIQELDWMGQGVARGATMYFVEGALPGETCDIEVVSSKKKVVSAKTIS) enclose the TRAM domain. Positions 121, 127, 130, and 208 each coordinate [4Fe-4S] cluster. 6 residues coordinate S-adenosyl-L-methionine: Q313, F342, N347, E363, D390, and D411. Catalysis depends on C437, which acts as the Nucleophile.

This sequence belongs to the class I-like SAM-binding methyltransferase superfamily. RNA M5U methyltransferase family. RlmD subfamily.

The enzyme catalyses uridine(1939) in 23S rRNA + S-adenosyl-L-methionine = 5-methyluridine(1939) in 23S rRNA + S-adenosyl-L-homocysteine + H(+). Catalyzes the formation of 5-methyl-uridine at position 1939 (m5U1939) in 23S rRNA. In Alteromonas mediterranea (strain DSM 17117 / CIP 110805 / LMG 28347 / Deep ecotype), this protein is 23S rRNA (uracil(1939)-C(5))-methyltransferase RlmD.